Reading from the N-terminus, the 746-residue chain is Centromere protein I (746 aa).

Positions 1-24 are disordered; it reads MATQRVTRNSQQQNRISQGSNSRQ.

Belongs to the CENP-I/CTF3 family. Component of the CENPA-CAD complex, composed of CENPI, CENPK, CENPL, CENPO, CENPP, CENPQ, CENPR and CENPS. The CENPA-CAD complex interacts with the CENPA-NAC complex, at least composed of CENPA, CENPC, CENPH, CENPM, CENPN, CENPT and CENPU. Interacts with SENP6. Post-translationally, sumoylated. Sumoylated form can be polyubiquitinated by RNF4, leading to its degradation. Desumoylation by SENP6 prevents its degradation.

The protein resides in the nucleus. It localises to the chromosome. The protein localises to the centromere. Component of the CENPA-CAD (nucleosome distal) complex, a complex recruited to centromeres which is involved in assembly of kinetochore proteins, mitotic progression and chromosome segregation. May be involved in incorporation of newly synthesized CENPA into centromeres via its interaction with the CENPA-NAC complex. Required for the localization of CENPF, MAD1L1 and MAD2 (MAD2L1 or MAD2L2) to kinetochores. Involved in the response of gonadal tissues to follicle-stimulating hormone. The protein is Centromere protein I (Cenpi) of Mus musculus (Mouse).